The chain runs to 147 residues: Submaxillary gland androgen-regulated protein 3A (147 aa).

A signal peptide spans 1–22 (MKPLNLVLGLCILVGCFLSCEC). A disordered region spans residues 27–128 (RRHDPRGPFP…ISITTPTARD (102 aa)). Over residues 33-105 (GPFPPPPPPH…PTPSIPPTGP (73 aa)) the composition is skewed to pro residues. Repeat copies occupy residues 43-54 (GPGIGRPHPPPF), 55-66 (GPGIGRPPPPPF), and 67-78 (GPGIGRPPPPPP). Residues 43–78 (GPGIGRPHPPPFGPGIGRPPPPPFGPGIGRPPPPPP) form a 3 X 12 AA tandem repeats of G-P-G-I-G-R-P-[HP]-P-P-P-[PF] region. A compositionally biased stretch (polar residues) spans 108 to 127 (TVQATTMPAASISITTPTAR).

The protein belongs to the PROL1/PROL3 family. Secreted into saliva by submaxillary gland.

The protein localises to the secreted. May play a role in protection or detoxification. The chain is Submaxillary gland androgen-regulated protein 3A (Smr3a) from Mus musculus (Mouse).